A 528-amino-acid chain; its full sequence is GMP synthase [glutamine-hydrolyzing] (528 aa).

A Glutamine amidotransferase type-1 domain is found at Ser13–Asp204. The active-site Nucleophile is Cys90. Active-site residues include His178 and Glu180. The region spanning Trp205–Arg403 is the GMPS ATP-PPase domain. Ser232–Ser238 is an ATP binding site.

In terms of assembly, homodimer.

It catalyses the reaction XMP + L-glutamine + ATP + H2O = GMP + L-glutamate + AMP + diphosphate + 2 H(+). It functions in the pathway purine metabolism; GMP biosynthesis; GMP from XMP (L-Gln route): step 1/1. Catalyzes the synthesis of GMP from XMP. This Prochlorococcus marinus (strain MIT 9312) protein is GMP synthase [glutamine-hydrolyzing].